A 456-amino-acid chain; its full sequence is Bifunctional protein GlmU (456 aa).

The interval 1–228 (MPQNTLNIVI…SHLAAGVNNK (228 aa)) is pyrophosphorylase. Residues 11–14 (LAAG), Lys-25, Gln-75, 80–81 (GT), 102–104 (YGD), Gly-138, Glu-153, Asn-168, and Asn-226 contribute to the UDP-N-acetyl-alpha-D-glucosamine site. Asp-104 serves as a coordination point for Mg(2+). Asn-226 contributes to the Mg(2+) binding site. The segment at 229–249 (LQLAELERIFQTGQAQELLKA) is linker. Positions 250–456 (GVTLHDPARF…GWVRPEKDKQ (207 aa)) are N-acetyltransferase. UDP-N-acetyl-alpha-D-glucosamine contacts are provided by Arg-332 and Lys-350. His-362 acts as the Proton acceptor in catalysis. UDP-N-acetyl-alpha-D-glucosamine-binding residues include Tyr-365 and Asn-376. Acetyl-CoA contacts are provided by residues Ala-379, 385 to 386 (NY), Ser-404, Ala-422, and Arg-439.

It in the N-terminal section; belongs to the N-acetylglucosamine-1-phosphate uridyltransferase family. This sequence in the C-terminal section; belongs to the transferase hexapeptide repeat family. As to quaternary structure, homotrimer. Mg(2+) is required as a cofactor.

It is found in the cytoplasm. It carries out the reaction alpha-D-glucosamine 1-phosphate + acetyl-CoA = N-acetyl-alpha-D-glucosamine 1-phosphate + CoA + H(+). It catalyses the reaction N-acetyl-alpha-D-glucosamine 1-phosphate + UTP + H(+) = UDP-N-acetyl-alpha-D-glucosamine + diphosphate. It participates in nucleotide-sugar biosynthesis; UDP-N-acetyl-alpha-D-glucosamine biosynthesis; N-acetyl-alpha-D-glucosamine 1-phosphate from alpha-D-glucosamine 6-phosphate (route II): step 2/2. The protein operates within nucleotide-sugar biosynthesis; UDP-N-acetyl-alpha-D-glucosamine biosynthesis; UDP-N-acetyl-alpha-D-glucosamine from N-acetyl-alpha-D-glucosamine 1-phosphate: step 1/1. Its pathway is bacterial outer membrane biogenesis; LPS lipid A biosynthesis. Catalyzes the last two sequential reactions in the de novo biosynthetic pathway for UDP-N-acetylglucosamine (UDP-GlcNAc). The C-terminal domain catalyzes the transfer of acetyl group from acetyl coenzyme A to glucosamine-1-phosphate (GlcN-1-P) to produce N-acetylglucosamine-1-phosphate (GlcNAc-1-P), which is converted into UDP-GlcNAc by the transfer of uridine 5-monophosphate (from uridine 5-triphosphate), a reaction catalyzed by the N-terminal domain. This is Bifunctional protein GlmU from Neisseria meningitidis serogroup C (strain 053442).